The sequence spans 72 residues: Large ribosomal subunit protein bL31 (72 aa).

It belongs to the bacterial ribosomal protein bL31 family. Type A subfamily. As to quaternary structure, part of the 50S ribosomal subunit.

Its function is as follows. Binds the 23S rRNA. The chain is Large ribosomal subunit protein bL31 from Rhodospirillum rubrum (strain ATCC 11170 / ATH 1.1.1 / DSM 467 / LMG 4362 / NCIMB 8255 / S1).